The following is a 332-amino-acid chain: UDP-N-acetylenolpyruvoylglucosamine reductase (332 aa).

The 199-residue stretch at 45–243 (RAGGHAAYFY…LGTRIKTQPL (199 aa)) folds into the FAD-binding PCMH-type domain. Arginine 194 is an active-site residue. Residue serine 250 is the Proton donor of the active site. The active site involves glutamate 320.

It belongs to the MurB family. It depends on FAD as a cofactor.

The protein resides in the cytoplasm. The enzyme catalyses UDP-N-acetyl-alpha-D-muramate + NADP(+) = UDP-N-acetyl-3-O-(1-carboxyvinyl)-alpha-D-glucosamine + NADPH + H(+). It participates in cell wall biogenesis; peptidoglycan biosynthesis. Functionally, cell wall formation. The polypeptide is UDP-N-acetylenolpyruvoylglucosamine reductase (Nitrosomonas eutropha (strain DSM 101675 / C91 / Nm57)).